A 302-amino-acid chain; its full sequence is MSHTAEIPMVPGSESPLELKPLKAVDPKTVYHRRAQRLLSLAKDSPLADYFELCRRVVAIQARLAAEADFGQLLAWGKDEAIPLSHLGSEADSYWQGLLQQLLSDLLPQVDEDMARVLRLLMQQSPEQLTSWGSALRQGHMSEVPARFSLFIWAAMGVYWSHWAPMVIKRIDQRKVVQQNLCPICGCHPVASVIVDQPRAGLRYLHCSLCESEWHYIRAHCTSCGQDKGTTLWSFDDAKAQVRIESCDECHGYTKMLFVEKSPLMDVAADDLATLMLDSELNAKGFGATTVNPLLLAHETEQ.

The protein belongs to the FdhE family.

It is found in the cytoplasm. Its function is as follows. Necessary for formate dehydrogenase activity. This is Protein FdhE homolog from Shewanella sp. (strain MR-4).